The primary structure comprises 234 residues: 7-cyano-7-deazaguanine synthase (234 aa).

13 to 23 serves as a coordination point for ATP; sequence FSGGIDSTTCL. 4 residues coordinate Zn(2+): C197, C207, C210, and C213.

It belongs to the QueC family. Zn(2+) serves as cofactor.

It catalyses the reaction 7-carboxy-7-deazaguanine + NH4(+) + ATP = 7-cyano-7-deazaguanine + ADP + phosphate + H2O + H(+). It functions in the pathway purine metabolism; 7-cyano-7-deazaguanine biosynthesis. Its function is as follows. Catalyzes the ATP-dependent conversion of 7-carboxy-7-deazaguanine (CDG) to 7-cyano-7-deazaguanine (preQ(0)). The polypeptide is 7-cyano-7-deazaguanine synthase (Syntrophobacter fumaroxidans (strain DSM 10017 / MPOB)).